Here is a 304-residue protein sequence, read N- to C-terminus: Coenzyme PQQ synthesis protein B (304 aa).

It belongs to the PqqB family.

It participates in cofactor biosynthesis; pyrroloquinoline quinone biosynthesis. Its function is as follows. May be involved in the transport of PQQ or its precursor to the periplasm. The protein is Coenzyme PQQ synthesis protein B of Pseudomonas aeruginosa (strain UCBPP-PA14).